A 261-amino-acid chain; its full sequence is Hemin import ATP-binding protein HmuV (261 aa).

The region spanning 3 to 239 (LDAADITVKL…AILSQAYGCA (237 aa)) is the ABC transporter domain. 35 to 42 (GPNGSGKT) lines the ATP pocket.

The protein belongs to the ABC transporter superfamily. Heme (hemin) importer (TC 3.A.1.14.5) family. As to quaternary structure, the complex is composed of two ATP-binding proteins (HmuV), two transmembrane proteins (HmuU) and a solute-binding protein (HmuT).

It is found in the cell inner membrane. In terms of biological role, part of the ABC transporter complex HmuTUV involved in hemin import. Responsible for energy coupling to the transport system. This is Hemin import ATP-binding protein HmuV from Roseobacter denitrificans (strain ATCC 33942 / OCh 114) (Erythrobacter sp. (strain OCh 114)).